The sequence spans 1906 residues: Serine protease/ABC transporter B family protein tagB (1906 aa).

The signal sequence occupies residues 1–31; sequence MKFQFSSPSKIFLFSSVILILIFIGIKFELL. Residues 96–134 form a disordered region; sequence INNNNNNNNKLNNNNNNNNNNNNNNNNNNNNNNNNNNNN. One can recognise a Peptidase S8 domain in the interval 356–763; it reads PTVIFGTKDK…ASSTNPSNAI (408 aa). Active-site charge relay system residues include Asp-387 and His-432. Asn-594, Asn-621, and Asn-672 each carry an N-linked (GlcNAc...) asparagine glycan. The active-site Charge relay system is Ser-695. Asn-747 and Asn-823 each carry an N-linked (GlcNAc...) asparagine glycan. 3 consecutive transmembrane segments (helical) span residues 1011-1031, 1076-1096, and 1121-1141; these read YIII…LMWI, FIIE…ASIL, and FIII…GSWI. The region spanning 1080–1363 is the ABC transmembrane type-1 domain; sequence LTIATACSLV…LFGVYVSYIQ (284 aa). Asn-1172 carries an N-linked (GlcNAc...) asparagine glycan. The next 3 membrane-spanning stretches (helical) occupy residues 1210–1230, 1309–1329, and 1332–1352; these read LVFI…AVPI, WLLI…LVIQ, and FTVG…DASS. The disordered stretch occupies residues 1385–1455; that stretch reads LEEEEADRLA…NNNNNIGNLD (71 aa). Over residues 1396–1405 the composition is skewed to gly residues; the sequence is LSGGGGGGGD. Residues 1407–1420 show a composition bias toward basic and acidic residues; it reads GDDKKDKQNIENGK. One can recognise an ABC transporter domain in the interval 1518–1756; sequence IEFKNVSFRY…KGKYYRMFSE (239 aa). The N-linked (GlcNAc...) asparagine glycan is linked to Asn-1522. 1553-1560 lines the ATP pocket; it reads GPSGSGKS. N-linked (GlcNAc...) asparagine glycosylation occurs at Asn-1658. Residues 1757–1906 form a disordered region; the sequence is DKDDTPLQNN…QMDEENDEER (150 aa). Composition is skewed to low complexity over residues 1765–1779 and 1814–1871; these read NNNN…NNNN and EQQE…DYDQ. The span at 1872 to 1886 shows a compositional bias: pro residues; it reads VPPPPPLPSESPSPP.

It in the C-terminal section; belongs to the ABC transporter superfamily. ABCB family. Multidrug resistance exporter (TC 3.A.1.201) subfamily. This sequence in the N-terminal section; belongs to the peptidase S8 family.

It localises to the membrane. Its function is as follows. Intercellular communication via tagB may mediate integration of cellular differentiation with morphogenesis. In Dictyostelium discoideum (Social amoeba), this protein is Serine protease/ABC transporter B family protein tagB (tagB).